We begin with the raw amino-acid sequence, 317 residues long: tRNA(Ile)-lysidine synthase (317 aa).

Position 30–35 (30–35 (SGGSDS)) interacts with ATP.

It belongs to the tRNA(Ile)-lysidine synthase family.

It is found in the cytoplasm. It carries out the reaction cytidine(34) in tRNA(Ile2) + L-lysine + ATP = lysidine(34) in tRNA(Ile2) + AMP + diphosphate + H(+). Ligates lysine onto the cytidine present at position 34 of the AUA codon-specific tRNA(Ile) that contains the anticodon CAU, in an ATP-dependent manner. Cytidine is converted to lysidine, thus changing the amino acid specificity of the tRNA from methionine to isoleucine. The protein is tRNA(Ile)-lysidine synthase of Chlamydia abortus (strain DSM 27085 / S26/3) (Chlamydophila abortus).